A 306-amino-acid polypeptide reads, in one-letter code: tRNA pseudouridine synthase B (306 aa).

Aspartate 46 functions as the Nucleophile in the catalytic mechanism.

It belongs to the pseudouridine synthase TruB family. Type 1 subfamily.

The catalysed reaction is uridine(55) in tRNA = pseudouridine(55) in tRNA. In terms of biological role, responsible for synthesis of pseudouridine from uracil-55 in the psi GC loop of transfer RNAs. The chain is tRNA pseudouridine synthase B from Gluconacetobacter diazotrophicus (strain ATCC 49037 / DSM 5601 / CCUG 37298 / CIP 103539 / LMG 7603 / PAl5).